Reading from the N-terminus, the 122-residue chain is Small ribosomal subunit protein bS6 (122 aa).

It belongs to the bacterial ribosomal protein bS6 family.

In terms of biological role, binds together with bS18 to 16S ribosomal RNA. This chain is Small ribosomal subunit protein bS6, found in Vibrio cholerae serotype O1 (strain ATCC 39541 / Classical Ogawa 395 / O395).